Reading from the N-terminus, the 330-residue chain is Glucosyltransferase 3 (330 aa).

UDP is bound at residue T16. The substrate protein-binding loop stretch occupies residues 106–111 (MFSGNF). Residues R179, 211–214 (YRPD), and 244–249 (SYKLGS) contribute to the UDP site.

The protein belongs to the Gtf3 glucosyltransferase family. Homotetramer; a dimer of dimers. In vitro glycosyltransferase activity is metal-independent. is required as a cofactor.

It participates in protein modification; protein glycosylation. Required for polymorphic O-glycosylation of the serine-rich repeat protein Fap1. Catalyzes the second step in glycosylation of the serine-rich repeat protein in this bacteria. Transfers glucose from UDP-glucose to the terminal GlcNAc moiety of 3-O-(N-acetyl-alpha-D-glucosaminyl)-L-seryl-[protein] which results from the first glycosylation step of Fap1; does not use other sugar nucleotides as substrates. The protein is Glucosyltransferase 3 of Streptococcus parasanguinis.